Consider the following 232-residue polypeptide: Histone H1-II (232 aa).

A compositionally biased stretch (low complexity) spans 1 to 18; the sequence is MSDPAPEVAPAAPVASPA. Disordered stretches follow at residues 1 to 44 and 103 to 232; these read MSDP…PPVS and GKGA…AKKA. Positions 39-114 constitute an H15 domain; the sequence is THPPVSEMVV…GASGSFKLPA (76 aa). Basic residues-rich tracts occupy residues 149-171 and 179-232; these read SIAKKPKAATATKVKKPVAKSTK and AAKK…AKKA.

Belongs to the histone H1/H5 family.

Its subcellular location is the nucleus. The protein localises to the chromosome. Its function is as follows. Histones H1 are necessary for the condensation of nucleosome chains into higher-order structures. This Glyptotendipes barbipes (Midge) protein is Histone H1-II.